The primary structure comprises 406 residues: Tyrosine--tRNA ligase (406 aa).

A 'HIGH' region motif is present at residues 51–60 (PTAPDLHLGH). The short motif at 236 to 240 (KMSKS) is the 'KMSKS' region element. Lysine 239 contributes to the ATP binding site. One can recognise an S4 RNA-binding domain in the interval 345–405 (IWICKAMVEG…GKRKFLRLIV (61 aa)).

The protein belongs to the class-I aminoacyl-tRNA synthetase family. TyrS type 2 subfamily. In terms of assembly, homodimer.

It localises to the cytoplasm. It catalyses the reaction tRNA(Tyr) + L-tyrosine + ATP = L-tyrosyl-tRNA(Tyr) + AMP + diphosphate + H(+). Catalyzes the attachment of tyrosine to tRNA(Tyr) in a two-step reaction: tyrosine is first activated by ATP to form Tyr-AMP and then transferred to the acceptor end of tRNA(Tyr). This Wolinella succinogenes (strain ATCC 29543 / DSM 1740 / CCUG 13145 / JCM 31913 / LMG 7466 / NCTC 11488 / FDC 602W) (Vibrio succinogenes) protein is Tyrosine--tRNA ligase.